A 243-amino-acid polypeptide reads, in one-letter code: GrpE protein homolog, mitochondrial (243 aa).

Positions 42–75 are disordered; it reads TEASKKEGKEDKAEAQGSQEPETAAETNKEAEGA. Positions 44–55 are enriched in basic and acidic residues; sequence ASKKEGKEDKAE.

The protein belongs to the GrpE family. In terms of assembly, component of the PAM complex, at least composed of mtHsp70, MGE1, TIM44, PAM16, PAM17 and PAM18.

The protein localises to the mitochondrion matrix. In terms of biological role, essential component of the PAM complex, a complex required for the translocation of transit peptide-containing proteins from the inner membrane into the mitochondrial matrix in an ATP-dependent manner. Seems to control the nucleotide-dependent binding of SSC1 to substrate proteins. This is GrpE protein homolog, mitochondrial (mge1) from Debaryomyces hansenii (strain ATCC 36239 / CBS 767 / BCRC 21394 / JCM 1990 / NBRC 0083 / IGC 2968) (Yeast).